A 498-amino-acid polypeptide reads, in one-letter code: MSELHLLSTQQLITGLQDKQFSSLELTDHYIKRINALDSKINSFITHTSETARAQAKAADEMRVQGDKRPLLGVPMAHKDIFCTQGVLTTCGSKMLHNFISPYDATIVTNIDKAGMISLGKLNMDEFAMGSDNESSYYGAVHNPWNIAHVPGGSSGGSAAAVAAGFVPVATGSDTGGSIRQPASFCGLTGIKPTYGRVSRFGMIAYASSLDQAGSMGRSAMDCAFLLQPMIGHDPRDATSIKYDMPDYVQDLNDAAASAGDKPFAGLRIGVAKEYFSKGLDTEVEQAARAALKKYEELGATIVEVTITDPEITLATYYMLAPAEASSNLSRFDGVRFGYRCENPKDLIDLYTRSRSEGFGPEVQRRILSGTYALSAGYFDAYYTKAQKVRRIIIKDFEDAFANCDVIASPTAPTAAYKLGEDLDPATMYLGDVYTIGVNLAGLPALSQPVGLTSAGLPIGLQLIGQYWQESKLLSTAHLFQQHTDHHLQHSTIAKETV.

Active-site charge relay system residues include Lys-79 and Ser-154. The active-site Acyl-ester intermediate is the Ser-178.

It belongs to the amidase family. GatA subfamily. Heterotrimer of A, B and C subunits.

It carries out the reaction L-glutamyl-tRNA(Gln) + L-glutamine + ATP + H2O = L-glutaminyl-tRNA(Gln) + L-glutamate + ADP + phosphate + H(+). Its function is as follows. Allows the formation of correctly charged Gln-tRNA(Gln) through the transamidation of misacylated Glu-tRNA(Gln) in organisms which lack glutaminyl-tRNA synthetase. The reaction takes place in the presence of glutamine and ATP through an activated gamma-phospho-Glu-tRNA(Gln). The polypeptide is Glutamyl-tRNA(Gln) amidotransferase subunit A (Psychrobacter cryohalolentis (strain ATCC BAA-1226 / DSM 17306 / VKM B-2378 / K5)).